A 126-amino-acid polypeptide reads, in one-letter code: MPSQDKEIDKIFLIGAGGFLGAVCRFLLCELVEGQLGILSVNVIGSFMLGMIMYDTEYLGFIGPKGKIAFGTGFMGAFTTFSTFAVQSFSLPFIPALGNISANIFLTLTGVFFGRSVIKALSSREI.

A run of 4 helical transmembrane segments spans residues 11–31 (IFLI…LCEL), 34–54 (GQLG…MIMY), 66–86 (GKIA…TFAV), and 93–113 (FIPA…GVFF). G76 and T79 together coordinate Na(+).

Belongs to the fluoride channel Fluc/FEX (TC 1.A.43) family.

The protein localises to the cell membrane. It catalyses the reaction fluoride(in) = fluoride(out). Its activity is regulated as follows. Na(+) is not transported, but it plays an essential structural role and its presence is essential for fluoride channel function. Fluoride-specific ion channel. Important for reducing fluoride concentration in the cell, thus reducing its toxicity. This Methanosarcina acetivorans (strain ATCC 35395 / DSM 2834 / JCM 12185 / C2A) protein is Fluoride-specific ion channel FluC 2.